The sequence spans 250 residues: 5'-nucleotidase SurE (250 aa).

The a divalent metal cation site is built by D8, D9, S39, and N95.

The protein belongs to the SurE nucleotidase family. A divalent metal cation is required as a cofactor.

Its subcellular location is the cytoplasm. It catalyses the reaction a ribonucleoside 5'-phosphate + H2O = a ribonucleoside + phosphate. In terms of biological role, nucleotidase that shows phosphatase activity on nucleoside 5'-monophosphates. The chain is 5'-nucleotidase SurE from Cupriavidus pinatubonensis (strain JMP 134 / LMG 1197) (Cupriavidus necator (strain JMP 134)).